We begin with the raw amino-acid sequence, 206 residues long: NADH-quinone oxidoreductase subunit C (206 aa).

It belongs to the complex I 30 kDa subunit family. NDH-1 is composed of 14 different subunits. Subunits NuoB, C, D, E, F, and G constitute the peripheral sector of the complex.

The protein localises to the cell inner membrane. The catalysed reaction is a quinone + NADH + 5 H(+)(in) = a quinol + NAD(+) + 4 H(+)(out). In terms of biological role, NDH-1 shuttles electrons from NADH, via FMN and iron-sulfur (Fe-S) centers, to quinones in the respiratory chain. The immediate electron acceptor for the enzyme in this species is believed to be ubiquinone. Couples the redox reaction to proton translocation (for every two electrons transferred, four hydrogen ions are translocated across the cytoplasmic membrane), and thus conserves the redox energy in a proton gradient. The sequence is that of NADH-quinone oxidoreductase subunit C from Nitrosomonas europaea (strain ATCC 19718 / CIP 103999 / KCTC 2705 / NBRC 14298).